Reading from the N-terminus, the 152-residue chain is Deoxyuridine 5'-triphosphate nucleotidohydrolase (152 aa).

Substrate-binding positions include 71 to 73 (RSG), Asn84, 88 to 90 (LID), and Met98.

It belongs to the dUTPase family. The cofactor is Mg(2+).

It catalyses the reaction dUTP + H2O = dUMP + diphosphate + H(+). The protein operates within pyrimidine metabolism; dUMP biosynthesis; dUMP from dCTP (dUTP route): step 2/2. This enzyme is involved in nucleotide metabolism: it produces dUMP, the immediate precursor of thymidine nucleotides and it decreases the intracellular concentration of dUTP so that uracil cannot be incorporated into DNA. This chain is Deoxyuridine 5'-triphosphate nucleotidohydrolase, found in Shewanella denitrificans (strain OS217 / ATCC BAA-1090 / DSM 15013).